Reading from the N-terminus, the 158-residue chain is Cyclic pyranopterin monophosphate synthase (158 aa).

Substrate is bound by residues Met74–His76 and Met112–Glu113. Asp127 is an active-site residue.

This sequence belongs to the MoaC family. Homohexamer; trimer of dimers.

It catalyses the reaction (8S)-3',8-cyclo-7,8-dihydroguanosine 5'-triphosphate = cyclic pyranopterin phosphate + diphosphate. Its pathway is cofactor biosynthesis; molybdopterin biosynthesis. Catalyzes the conversion of (8S)-3',8-cyclo-7,8-dihydroguanosine 5'-triphosphate to cyclic pyranopterin monophosphate (cPMP). This chain is Cyclic pyranopterin monophosphate synthase, found in Helicobacter pylori (strain P12).